Here is a 94-residue protein sequence, read N- to C-terminus: Large ribosomal subunit protein bL25 (94 aa).

Belongs to the bacterial ribosomal protein bL25 family. As to quaternary structure, part of the 50S ribosomal subunit; part of the 5S rRNA/L5/L18/L25 subcomplex. Contacts the 5S rRNA. Binds to the 5S rRNA independently of L5 and L18.

This is one of the proteins that binds to the 5S RNA in the ribosome where it forms part of the central protuberance. The chain is Large ribosomal subunit protein bL25 from Shigella boydii serotype 4 (strain Sb227).